Reading from the N-terminus, the 289-residue chain is MSEYTTREVGALNTLDYQVYVEKNGTPISSWHDIPLYANAEKTILNMVVEIPRWTQAKLEITKEATLNPIKQDTKKGKLRFVRNCFPHHGYIWNYGAFPQTYEDPNVVHPETKAKGDSDPLDVCEIGEARGYTGQVKQVKVLGVMALLDEGETDWKVIVIDVNDPLAPKLNDIEDVERHMPGLIRATNEWFRIYKIPDGKPENSFAFSGECKNRKYAEEVVRECNEAWERLITGKTDAKSDFSLVNVSVTGSVANDPSVSSTIPPAQELAPAPVDPSVHKWFYISGSPL.

Arg-80 is a binding site for diphosphate. The Mg(2+) site is built by Asp-117, Asp-122, and Asp-154.

Belongs to the PPase family. Homodimer. The cofactor is Mg(2+).

Its subcellular location is the cytoplasm. It carries out the reaction diphosphate + H2O = 2 phosphate + H(+). The protein is Inorganic pyrophosphatase (ppa1) of Schizosaccharomyces pombe (strain 972 / ATCC 24843) (Fission yeast).